Consider the following 642-residue polypeptide: Phosphomethylpyrimidine synthase (642 aa).

Residues Asn-235, Met-264, Tyr-293, His-329, 349–351 (SRG), 390–393 (DGLR), and Glu-429 contribute to the substrate site. A Zn(2+)-binding site is contributed by His-433. Tyr-456 contacts substrate. His-497 lines the Zn(2+) pocket. Positions 577, 580, and 585 each coordinate [4Fe-4S] cluster.

Belongs to the ThiC family. In terms of assembly, homodimer. It depends on [4Fe-4S] cluster as a cofactor.

It catalyses the reaction 5-amino-1-(5-phospho-beta-D-ribosyl)imidazole + S-adenosyl-L-methionine = 4-amino-2-methyl-5-(phosphooxymethyl)pyrimidine + CO + 5'-deoxyadenosine + formate + L-methionine + 3 H(+). Its pathway is cofactor biosynthesis; thiamine diphosphate biosynthesis. Functionally, catalyzes the synthesis of the hydroxymethylpyrimidine phosphate (HMP-P) moiety of thiamine from aminoimidazole ribotide (AIR) in a radical S-adenosyl-L-methionine (SAM)-dependent reaction. In Alteromonas mediterranea (strain DSM 17117 / CIP 110805 / LMG 28347 / Deep ecotype), this protein is Phosphomethylpyrimidine synthase.